The sequence spans 452 residues: Eukaryotic translation initiation factor 4B3 (452 aa).

At Ala-2 the chain carries N-acetylalanine. Positions 20–282 are disordered; that stretch reads EEHEAELKQQ…PSGGSRPRLV (263 aa). Residues 28 to 37 are compositionally biased toward polar residues; that stretch reads QQPSPTNQKS. A compositionally biased stretch (basic and acidic residues) spans 98–110; sequence PRERSAEELDRSK. Positions 111–122 are enriched in gly residues; that stretch reads LGGGFRSYGGGR. Residues 126-136 are compositionally biased toward low complexity; that stretch reads ESSSSRWGSSR. The segment covering 137–156 has biased composition (basic and acidic residues); sequence VSEDGERRGGGFNRDREPSR. Short sequence motifs (nuclear localization signal) lie at residues 172–179 and 215–222; these read AKKPISGN and PRRFVSSN. Over residues 227 to 243 the composition is skewed to basic and acidic residues; sequence DRFEKRGSFESLSRNRD. Ser-234, Ser-270, and Ser-300 each carry phosphoserine. Residues 265–280 show a composition bias toward low complexity; sequence GAANGSPPPSGGSRPR. Positions 349 to 452 are disordered; the sequence is AAMEKPNEKS…AKKEETEDKI (104 aa). The span at 369 to 386 shows a compositional bias: basic and acidic residues; sequence GRKDEERIERSWRKSTEH. The segment covering 387–397 has biased composition (acidic residues); the sequence is SEEDAQEEEPA. Basic and acidic residues-rich tracts occupy residues 400–419 and 441–452; these read GAKK…KKEE and EEAKKEETEDKI.

This sequence belongs to the eIF-4 subunit B family. Homodimer. Nonspherical monomer. mRNA-discriminating component of initiation complexes. Interacts with MAD2. Phosphorylated.

The protein localises to the nucleus. Promotes the eIF4F and eIF4A RNA-dependent ATP-hydrolysis activity with different efficiency depending on mRNAs, thus providing mRNA discrimination during initiation of translation. This is Eukaryotic translation initiation factor 4B3 from Arabidopsis thaliana (Mouse-ear cress).